The chain runs to 242 residues: Protein HTATIP2 (242 aa).

N-acetylalanine is present on Ala-2. Residues 2–25 are required for interaction with elongation factor EEF1A1; it reads ADKETLLKLREDFKMQNKSVFILG. Residues Ser-27, Gly-28, Glu-29, Thr-30, Arg-52, Arg-53, Leu-92, Gly-93, Tyr-143, Lys-147, Leu-170, and Arg-178 each contribute to the NADPH site. The active-site Proton acceptor is the Tyr-143. Residue Lys-147 is part of the active site.

Monomer. Forms homodimers during oxidative stress. Interacts (via N-terminus) with elongation factor EEF1A1 (via middle-region); the interaction is direct and competes with EEF1A1 binding to guanyl-nucleotide exchange factor EEF1B2, thereby inhibiting GDP for GTP exchange and reactivation of EEF1A1. Interacts with nuclear transport receptors XPO4, IPO5/RANBP5, IPO7, IPO9 and KPNB1 as well as GCN1L1/GCN1 and LRPPRC probably through their HEAT repeats. Binds NCOA5/CIA.

Its function is as follows. Represses translation by preventing reactivation of elongation factor eEF1A. May also inhibit nuclear import by competing with nuclear import substrates for binding to a subset of nuclear transport receptors. Has additionally been proposed to act as a redox sensor involved in cellular oxidative stress surveillance. May bind NADPH. The polypeptide is Protein HTATIP2 (Rattus norvegicus (Rat)).